Here is a 246-residue protein sequence, read N- to C-terminus: Bidirectional sugar transporter SWEET3a (246 aa).

The Extracellular segment spans residues 1-6; it reads MFPDIR. A helical transmembrane segment spans residues 7 to 27; it reads FIVGIIGSVACMLLYSAPILT. The 90-residue stretch at 7 to 96 folds into the MtN3/slv 1 domain; sequence FIVGIIGSVA…ISIYVWFAPR (90 aa). Topologically, residues 28–42 are cytoplasmic; it reads FKRVIKKASVEEFSC. The helical transmembrane segment at 43–63 threads the bilayer; sequence IPYILALFSCLTYSWYGFPVV. The Extracellular segment spans residues 64–74; it reads SYGWENMTVCS. The N-linked (GlcNAc...) asparagine glycan is linked to asparagine 69. A helical transmembrane segment spans residues 75–95; it reads ISSLGVLFEGTFISIYVWFAP. Over 96 to 101 the chain is Cytoplasmic; that stretch reads RGKKKQ. A helical membrane pass occupies residues 102 to 122; the sequence is VMLMASLILAVFCMTVFFSSF. The Extracellular portion of the chain corresponds to 123-131; sequence SIHNHHIRK. A helical membrane pass occupies residues 132–152; the sequence is VFVGSVGLVSSISMYGSPLVA. In terms of domain architecture, MtN3/slv 2 spans 133-217; the sequence is FVGSVGLVSS…VVYCIYSKCK (85 aa). Residues 153-166 lie on the Cytoplasmic side of the membrane; sequence MKQVIRTKSVEFMP. The helical transmembrane segment at 167-187 threads the bilayer; the sequence is FYLSLFTLFTSLTWMAYGVIG. Over 188-191 the chain is Extracellular; it reads RDPF. A helical transmembrane segment spans residues 192–212; sequence IATPNCIGSIMGILQLVVYCI. Over 213–246 the chain is Cytoplasmic; that stretch reads YSKCKEAPKVLHDIEQANVVKIPTSHVDTKGHNP.

The protein belongs to the SWEET sugar transporter family. Forms homooligomers and/or heterooligomers.

The protein resides in the cell membrane. In terms of biological role, mediates both low-affinity uptake and efflux of sugar across the plasma membrane. This Oryza sativa subsp. japonica (Rice) protein is Bidirectional sugar transporter SWEET3a (SWEET3A).